We begin with the raw amino-acid sequence, 194 residues long: Peptidyl-tRNA hydrolase (194 aa).

His17 contacts tRNA. The Proton acceptor role is filled by His22. The tRNA site is built by Phe68, Asn70, and Asn116.

The protein belongs to the PTH family. In terms of assembly, monomer.

The protein resides in the cytoplasm. It catalyses the reaction an N-acyl-L-alpha-aminoacyl-tRNA + H2O = an N-acyl-L-amino acid + a tRNA + H(+). Functionally, hydrolyzes ribosome-free peptidyl-tRNAs (with 1 or more amino acids incorporated), which drop off the ribosome during protein synthesis, or as a result of ribosome stalling. In terms of biological role, catalyzes the release of premature peptidyl moieties from peptidyl-tRNA molecules trapped in stalled 50S ribosomal subunits, and thus maintains levels of free tRNAs and 50S ribosomes. This chain is Peptidyl-tRNA hydrolase, found in Xanthomonas oryzae pv. oryzae (strain MAFF 311018).